The chain runs to 170 residues: Small ribosomal subunit protein uS13m (170 aa).

The segment at 130 to 170 is disordered; that stretch reads LKKKPTNRKERRIFNKIKKLQDKHNKQQQKNKKSKKWKTKK. Composition is skewed to basic residues over residues 132–147 and 155–170; these read KKPT…NKIK and KQQQ…KTKK.

This sequence belongs to the universal ribosomal protein uS13 family. In terms of assembly, part of the small ribosomal subunit.

It localises to the mitochondrion. In terms of biological role, located at the top of the head of the small subunit, it contacts several helices of the small subunit rRNA. The chain is Small ribosomal subunit protein uS13m (mrps13) from Dictyostelium citrinum (Slime mold).